Reading from the N-terminus, the 958-residue chain is Protein translocase subunit SecA (958 aa).

ATP contacts are provided by residues Q87, 105 to 109 (GEGKT), and D524. The disordered stretch occupies residues 598–617 (RRIDNQLRGRSGRQGDPGRS). Zn(2+) contacts are provided by C939, C941, C950, and H951.

Belongs to the SecA family. In terms of assembly, monomer and homodimer. Part of the essential Sec protein translocation apparatus which comprises SecA, SecYEG and auxiliary proteins SecDF-YajC and YidC. Zn(2+) is required as a cofactor.

The protein resides in the cell inner membrane. The protein localises to the cytoplasm. The catalysed reaction is ATP + H2O + cellular proteinSide 1 = ADP + phosphate + cellular proteinSide 2.. Functionally, part of the Sec protein translocase complex. Interacts with the SecYEG preprotein conducting channel. Has a central role in coupling the hydrolysis of ATP to the transfer of proteins into and across the cell membrane, serving both as a receptor for the preprotein-SecB complex and as an ATP-driven molecular motor driving the stepwise translocation of polypeptide chains across the membrane. The polypeptide is Protein translocase subunit SecA (Methylobacterium sp. (strain 4-46)).